We begin with the raw amino-acid sequence, 143 residues long: Ribosome-binding factor A (143 aa).

Residues aspartate 123–arginine 143 are disordered.

It belongs to the RbfA family. As to quaternary structure, monomer. Binds 30S ribosomal subunits, but not 50S ribosomal subunits or 70S ribosomes.

Its subcellular location is the cytoplasm. In terms of biological role, one of several proteins that assist in the late maturation steps of the functional core of the 30S ribosomal subunit. Associates with free 30S ribosomal subunits (but not with 30S subunits that are part of 70S ribosomes or polysomes). Required for efficient processing of 16S rRNA. May interact with the 5'-terminal helix region of 16S rRNA. This Francisella tularensis subsp. novicida (strain U112) protein is Ribosome-binding factor A.